The sequence spans 181 residues: MLIFKDAFTDDELASDSFPMKLVDGLIWEFKGRQVVRREGEIQLAGANPSAEGEDGDEGSEECVERGIDFVLNHRLQEMNCYEDLVTFKSYCKSFMKKVVELMQKNGKSEAEISEFKRKIPAWVVSLLSKDRFKQLQFFIGERMAEGQGEGQVAVVEYRDEEDGEVPYLMLVKEALIEEKQ.

The TCTP domain occupies 1–181; that stretch reads MLIFKDAFTD…VKEALIEEKQ (181 aa).

Belongs to the TCTP family.

It is found in the cytoplasm. Functionally, involved in calcium binding and microtubule stabilization. The sequence is that of Translationally-controlled tumor protein homolog from Brugia malayi (Filarial nematode worm).